We begin with the raw amino-acid sequence, 309 residues long: E3 ubiquitin-protein ligase SINAT5 (309 aa).

An RING-type zinc finger spans residues 46 to 82; sequence CPVCTNSMYPPIHQCHNGHTLCSTCKSRVHNRCPTCR. The interval 96–289 is SBD; it reads VAESLELPCK…KELKLRVTGR (194 aa). The segment at 99–159 adopts an SIAH-type zinc-finger fold; it reads SLELPCKYYN…LVAHLRDDHK (61 aa). Zn(2+) is bound by residues C104, C111, H123, C127, C134, C141, H153, and H158.

Belongs to the SINA (Seven in absentia) family. As to quaternary structure, homodimer; homodimerization is essential for its function. Interacts with UBC28 and NAC021/NAC022. Interacts with SINAT6. Interacts with ATG6 and TRAF1A. Interacts with WAV3. Interacts with FREE1. In terms of tissue distribution, expressed at low level in the vascular tissue of mature roots. Expressed in lateral roots and in elongation zone of the main root upon stimulation by auxin. Colocalizes with NAC021/NAC022.

It is found in the nucleus. The protein localises to the cytoplasm. It carries out the reaction S-ubiquitinyl-[E2 ubiquitin-conjugating enzyme]-L-cysteine + [acceptor protein]-L-lysine = [E2 ubiquitin-conjugating enzyme]-L-cysteine + N(6)-ubiquitinyl-[acceptor protein]-L-lysine.. The protein operates within protein modification; protein ubiquitination. E3 ubiquitin-protein ligase that mediates ubiquitination and subsequent proteasomal degradation of target proteins. E3 ubiquitin ligases accept ubiquitin from an E2 ubiquitin-conjugating enzyme in the form of a thioester and then directly transfers the ubiquitin to targeted substrates. Mediates the ubiquitination and proteasomal-dependent degradation of NAC021/NAC022, a transcription activator that functions downstream of the auxin signals, thereby acting as a down-regulator of auxin signals. Involved in the formation of lateral roots. Is antagonist to SINAT1, SINAT2, SINAT3 and SINAT4 by suppressing FREE1 ubiquitination and degradation mediated by SINAT1, SINAT2, SINAT3 and SINAT4, and promoting FREE1 accumulation. This is E3 ubiquitin-protein ligase SINAT5 from Arabidopsis thaliana (Mouse-ear cress).